Reading from the N-terminus, the 194-residue chain is dTTP/UTP pyrophosphatase (194 aa).

The active-site Proton acceptor is aspartate 69.

Belongs to the Maf family. YhdE subfamily. The cofactor is a divalent metal cation.

It localises to the cytoplasm. It carries out the reaction dTTP + H2O = dTMP + diphosphate + H(+). The catalysed reaction is UTP + H2O = UMP + diphosphate + H(+). In terms of biological role, nucleoside triphosphate pyrophosphatase that hydrolyzes dTTP and UTP. May have a dual role in cell division arrest and in preventing the incorporation of modified nucleotides into cellular nucleic acids. The chain is dTTP/UTP pyrophosphatase from Symbiobacterium thermophilum (strain DSM 24528 / JCM 14929 / IAM 14863 / T).